We begin with the raw amino-acid sequence, 427 residues long: Glutamate-1-semialdehyde 2,1-aminomutase (427 aa).

Position 265 is an N6-(pyridoxal phosphate)lysine (K265).

The protein belongs to the class-III pyridoxal-phosphate-dependent aminotransferase family. HemL subfamily. Homodimer. Pyridoxal 5'-phosphate is required as a cofactor.

Its subcellular location is the cytoplasm. The enzyme catalyses (S)-4-amino-5-oxopentanoate = 5-aminolevulinate. It functions in the pathway porphyrin-containing compound metabolism; protoporphyrin-IX biosynthesis; 5-aminolevulinate from L-glutamyl-tRNA(Glu): step 2/2. The chain is Glutamate-1-semialdehyde 2,1-aminomutase from Burkholderia ambifaria (strain ATCC BAA-244 / DSM 16087 / CCUG 44356 / LMG 19182 / AMMD) (Burkholderia cepacia (strain AMMD)).